A 526-amino-acid polypeptide reads, in one-letter code: Dye-decolorizing peroxidase (526 aa).

A signal peptide spans 1 to 21 (MRKSISTFILLSVLSVGQLVA). Positions 22–63 (ARPRSTNAPPRRRTPQPRRTTSLFINPPALPDLPTVQAVDKL) are excised as a propeptide. N-linked (GlcNAc...) asparagine glycosylation is present at N186. Catalysis depends on D231, which acts as the Proton acceptor. Residue N367 is glycosylated (N-linked (GlcNAc...) asparagine). H376 lines the heme pocket. N-linked (GlcNAc...) asparagine glycans are attached at residues N473 and N484.

Belongs to the DyP-type peroxidase family. Heme b serves as cofactor.

Its subcellular location is the secreted. The catalysed reaction is Reactive Blue 5 + 2 H2O2 = 2,2'-disulfonyl azobenzene + 3-[(4-amino-6-chloro-1,3,5-triazin-2-yl)amino]benzenesulfonate + phthalate + 2 H2O + 2 H(+). It catalyses the reaction 2 a phenolic donor + H2O2 = 2 a phenolic radical donor + 2 H2O. Manganese-independent peroxidase that is able to convert a large number of compounds, but its physiological substrate is not known. In addition to classic peroxidase substrates (e.g. 2,6-dimethoxyphenol), oxidizes dyes such as Reactive Blue 5 and Reactive Black 5. The chain is Dye-decolorizing peroxidase from Mycena epipterygia (Yellow-stemmed mycena).